Consider the following 322-residue polypeptide: Ferredoxin--NADP reductase (322 aa).

Leu87, Phe119, Asp279, and Thr320 together coordinate FAD.

Belongs to the ferredoxin--NADP reductase type 2 family. In terms of assembly, homodimer. The cofactor is FAD.

It catalyses the reaction 2 reduced [2Fe-2S]-[ferredoxin] + NADP(+) + H(+) = 2 oxidized [2Fe-2S]-[ferredoxin] + NADPH. This chain is Ferredoxin--NADP reductase, found in Streptococcus suis (strain 98HAH33).